A 1838-amino-acid chain; its full sequence is Lysine-specific demethylase 5 (1838 aa).

Residues 1–150 (MSAKTEADNT…SSNKFDQGKN (150 aa)) form a disordered region. Residues 15–31 (SGGGGVGSGTSSGGGAS) show a composition bias toward gly residues. Residues 45-56 (RNSTGNGTNSGS) are compositionally biased toward low complexity. The segment covering 136 to 145 (HTQPHSSNKF) has biased composition (polar residues). In terms of domain architecture, JmjN spans 161–202 (CPVFRPTTEEFKNPLAYISKIRSIAEKCGIAKILPPATWSPP). In terms of domain architecture, ARID spans 226 to 316 (TRVKLNFLDQ…ILHPFEVYTS (91 aa)). A compositionally biased stretch (low complexity) spans 321–333 (GPTPTSSGSGSTP). 2 disordered regions span residues 321 to 380 (GPTP…GLSG) and 416 to 437 (GSPL…KGGE). T323 bears the Phosphothreonine mark. 3 stretches are compositionally biased toward polar residues: residues 351–361 (TRQQIAPPNET), 369–380 (FGNSNASCGLSG), and 416–430 (GSPL…TRGA). The segment at 448 to 498 (KYICHICNRGDVEESMLLCDGCDDSYHTFCLLPPLTSIPKGEWLCPRCVVE) adopts a PHD-type 1 zinc-finger fold. The JmjC domain maps to 591–757 (EYAESSWNLN…MGRECVNHYS (167 aa)). Fe cation is bound by residues H637, D640, and H725. Residues 960-1049 (VRTRSDHNQE…LRIELQQLDL (90 aa)) are a coiled coil. The PHD-type 2 zinc-finger motif lies at 1293–1354 (DMFCLCKSEF…KWLCPSCVRS (62 aa)). The disordered stretch occupies residues 1401-1462 (SSPDVSAAQE…SDADDDDDED (62 aa)). The segment covering 1407 to 1417 (AAQEAIMAQQQ) has biased composition (low complexity). A phosphoserine mark is found at S1422 and S1433. Acidic residues predominate over residues 1453-1462 (SDADDDDDED). At S1474 the chain carries Phosphoserine. The tract at residues 1548 to 1751 (YMQRQRQQHT…QRSQQAAQED (204 aa)) is disordered. Composition is skewed to low complexity over residues 1576–1595 (NSPN…SNSG), 1624–1650 (GKKG…PGAD), 1658–1667 (ANGGNTNSST), 1674–1683 (SATTTPTPGS), and 1692–1736 (STTA…ATGG). A phosphoserine mark is found at S1635 and S1640. Residues 1753 to 1808 (EEECRAENCHKPTGREVDWVQCDGGCNEWFHMYCVGLNRSQIKPDDDYICIRCTKT) form a PHD-type 3 zinc finger. The segment at 1814–1838 (QGSGHSMSVASTTTPGKQRAVQSAR) is disordered.

The protein belongs to the JARID1 histone demethylase family. Interacts with Myc. Part of a complex containing Lid, Myc and Ash2. The cofactor is Fe(2+).

It is found in the nucleus. The catalysed reaction is N(6),N(6),N(6)-trimethyl-L-lysyl(4)-[histone H3] + 3 2-oxoglutarate + 3 O2 = L-lysyl(4)-[histone H3] + 3 formaldehyde + 3 succinate + 3 CO2. With respect to regulation, inhibited by Myc. Functionally, histone demethylase that specifically demethylates 'Lys-4' of histone H3, thereby playing a central role in histone code. Does not demethylate histone H3 'Lys-9', H3 'Lys-27', H3 'Lys-36', H3 'Lys-79' or H4 'Lys-20'. Specifically demethylates trimethylated H3 'Lys-4'. Required for the correct regulation of homeotic genes during development. Plays a role in the regulation of the circadian rhythm and in maintaining the normal periodicity of the circadian clock. Regulates the expression of clock-controlled genes including tim, per and cry. The chain is Lysine-specific demethylase 5 from Drosophila melanogaster (Fruit fly).